A 68-amino-acid chain; its full sequence is Phycobilisome 7.8 kDa linker polypeptide, allophycocyanin-associated, core (68 aa).

Residues 2–57 enclose the CpcD-like domain; that stretch reads ARLFKVTACVPSQTRIRTQRELQNTYFTKLVPFENWFREQQRIMKMGGKIVKVELA.

This sequence belongs to the phycobilisome linker protein family.

It is found in the cellular thylakoid membrane. In terms of biological role, rod linker protein, associated with allophycocyanin. Linker polypeptides determine the state of aggregation and the location of the disk-shaped phycobiliprotein units within the phycobilisome and modulate their spectroscopic properties in order to mediate a directed and optimal energy transfer. The chain is Phycobilisome 7.8 kDa linker polypeptide, allophycocyanin-associated, core (apcC) from Microchaete diplosiphon (Fremyella diplosiphon).